The primary structure comprises 238 residues: Ribosomal RNA small subunit methyltransferase G (238 aa).

Residues Gly77, Phe82, 128-129, and Arg147 contribute to the S-adenosyl-L-methionine site; that span reads AE.

Belongs to the methyltransferase superfamily. RNA methyltransferase RsmG family.

Its subcellular location is the cytoplasm. In terms of biological role, specifically methylates the N7 position of guanine in position 535 of 16S rRNA. The polypeptide is Ribosomal RNA small subunit methyltransferase G (Listeria monocytogenes serotype 4b (strain F2365)).